We begin with the raw amino-acid sequence, 229 residues long: Large ribosomal subunit protein uL1 (229 aa).

This sequence belongs to the universal ribosomal protein uL1 family. Part of the 50S ribosomal subunit.

In terms of biological role, binds directly to 23S rRNA. The L1 stalk is quite mobile in the ribosome, and is involved in E site tRNA release. Protein L1 is also a translational repressor protein, it controls the translation of the L11 operon by binding to its mRNA. The chain is Large ribosomal subunit protein uL1 from Clostridium botulinum (strain 657 / Type Ba4).